The primary structure comprises 441 residues: Putative F-box protein At1g33530 (441 aa).

Residues 91-137 (TTLAVELPDVLVEEILQRLPVKYLVRLKSISKGWKSLIESDHLAEKH) enclose the F-box domain.

This Arabidopsis thaliana (Mouse-ear cress) protein is Putative F-box protein At1g33530.